A 359-amino-acid chain; its full sequence is 4-hydroxy-3-methylbut-2-en-1-yl diphosphate synthase (flavodoxin) (359 aa).

Residues Cys-264, Cys-267, Cys-299, and Glu-306 each contribute to the [4Fe-4S] cluster site.

The protein belongs to the IspG family. [4Fe-4S] cluster is required as a cofactor.

It catalyses the reaction (2E)-4-hydroxy-3-methylbut-2-enyl diphosphate + oxidized [flavodoxin] + H2O + 2 H(+) = 2-C-methyl-D-erythritol 2,4-cyclic diphosphate + reduced [flavodoxin]. The protein operates within isoprenoid biosynthesis; isopentenyl diphosphate biosynthesis via DXP pathway; isopentenyl diphosphate from 1-deoxy-D-xylulose 5-phosphate: step 5/6. In terms of biological role, converts 2C-methyl-D-erythritol 2,4-cyclodiphosphate (ME-2,4cPP) into 1-hydroxy-2-methyl-2-(E)-butenyl 4-diphosphate. The chain is 4-hydroxy-3-methylbut-2-en-1-yl diphosphate synthase (flavodoxin) from Helicobacter pylori (strain Shi470).